Here is a 338-residue protein sequence, read N- to C-terminus: 4-hydroxy-2-oxovalerate aldolase (338 aa).

Residues 6-256 (IHIVDTTLRD…RTGVDFYKVM (251 aa)) enclose the Pyruvate carboxyltransferase domain. Position 14–15 (14–15 (RD)) interacts with substrate. D15 provides a ligand contact to Mn(2+). H18 acts as the Proton acceptor in catalysis. Positions 168 and 195 each coordinate substrate. Mn(2+)-binding residues include H195 and H197. Y286 is a substrate binding site.

The protein belongs to the 4-hydroxy-2-oxovalerate aldolase family.

The enzyme catalyses (S)-4-hydroxy-2-oxopentanoate = acetaldehyde + pyruvate. This chain is 4-hydroxy-2-oxovalerate aldolase, found in Moorella thermoacetica (strain ATCC 39073 / JCM 9320).